Here is a 145-residue protein sequence, read N- to C-terminus: Large ribosomal subunit protein bL17 (145 aa).

Belongs to the bacterial ribosomal protein bL17 family. As to quaternary structure, part of the 50S ribosomal subunit. Contacts protein L32.

This is Large ribosomal subunit protein bL17 from Orientia tsutsugamushi (strain Ikeda) (Rickettsia tsutsugamushi).